We begin with the raw amino-acid sequence, 337 residues long: Terpene cyclase (337 aa).

The chain crosses the membrane as a helical span at residues 5 to 25 (ASVIFLSLSVLAAVGVWGPFV). An N-linked (GlcNAc...) asparagine glycan is attached at N65. 7 helical membrane-spanning segments follow: residues 72–92 (IAYC…VILC), 111–131 (GLLS…MSFI), 149–169 (ALIL…LNVL), 177–197 (IWGI…ARII), 222–242 (VAGG…LGIF), 267–287 (LQVD…HELI), and 298–318 (LGGL…AAAW).

The protein belongs to the membrane-bound ascI terpene cyclase family.

The protein localises to the membrane. It participates in antifungal biosynthesis. In terms of biological role, cyclase; part of the gene cluster that mediates the biosynthesis of the tetrahydropyranyl antifungal agent lanomycin that acts as an inhibitor of CYP51 and blocks the ergosterol biosynthesis. The biosynthesis probably begins with the formation of an hexaketide, followed by methionine mediated alkylation of C-2 and C-6, and methylation of the reduced C-3 oxygen, pyran forming reductive ring closure, oxygenation of C-4, beta-keto reduction, enoyl reduction and dehydration of the remaining oxygens, and finally, acylation with glycine to complete the biosynthesis. This chain is Terpene cyclase, found in Pyrenophora dematioidea (Helminthosporium dematioideum).